Reading from the N-terminus, the 559-residue chain is Cytokine-like nuclear factor N-PAC (559 aa).

The 62-residue stretch at 9–70 (VNDLVWAKMK…ETQIKPYQEF (62 aa)) folds into the PWWP domain. Positions 106–137 (SEQDNRPDPDVEFNKLREGGTESGEETTVNNT) are disordered. Residues 108–125 (QDNRPDPDVEFNKLREGG) show a composition bias toward basic and acidic residues. Positions 267–559 (RNIQASNLKF…SSAVYVRARF (293 aa)) are dehydrogenase domain. Residues 277-291 (GFLG…MVKN) and K511 each bind NAD(+).

It belongs to the HIBADH-related family. NP60 subfamily. Binds to mononucleosomes.

The protein resides in the chromosome. Nucleosome-destabilizing factor that is recruited to genes during transcriptional activation and colocalizes with a subset of trimethylated 'Lys-36' histone H3 (H3K36me3)-enriched regions. This is Cytokine-like nuclear factor N-PAC from Aedes aegypti (Yellowfever mosquito).